Consider the following 482-residue polypeptide: Adenylosuccinate lyase (482 aa).

Substrate contacts are provided by residues 14–15 (RY), 82–84 (RHD), and 108–109 (TS). His156 (proton donor/acceptor) is an active-site residue. Gln238 serves as a coordination point for substrate. Catalysis depends on Ser286, which acts as the Proton donor/acceptor. Residues Arg300, Arg326, Ser331, and Arg335 each coordinate substrate.

The protein belongs to the lyase 1 family. Adenylosuccinate lyase subfamily. As to quaternary structure, homotetramer. Residues from neighboring subunits contribute catalytic and substrate-binding residues to each active site.

The catalysed reaction is N(6)-(1,2-dicarboxyethyl)-AMP = fumarate + AMP. The enzyme catalyses (2S)-2-[5-amino-1-(5-phospho-beta-D-ribosyl)imidazole-4-carboxamido]succinate = 5-amino-1-(5-phospho-beta-D-ribosyl)imidazole-4-carboxamide + fumarate. It functions in the pathway purine metabolism; AMP biosynthesis via de novo pathway; AMP from IMP: step 2/2. The protein operates within purine metabolism; IMP biosynthesis via de novo pathway; 5-amino-1-(5-phospho-D-ribosyl)imidazole-4-carboxamide from 5-amino-1-(5-phospho-D-ribosyl)imidazole-4-carboxylate: step 2/2. This chain is Adenylosuccinate lyase (ade8), found in Schizosaccharomyces pombe (strain 972 / ATCC 24843) (Fission yeast).